Consider the following 214-residue polypeptide: Osteoclast-stimulating factor 1 (214 aa).

One can recognise an SH3 domain in the interval 12-71 (GQVKVYRALFTFDPRTPDELYFEEGDILYISDTSDSNWWKGTCRGRTGLIPSNYVAEQAE). ANK repeat units follow at residues 72–101 (SIDN…GING), 105–135 (AGNT…ELNQ), and 139–168 (LGDT…RTDV).

Its subcellular location is the cytoplasm. Functionally, induces bone resorption, acting probably through a signaling cascade which results in the secretion of factor(s) enhancing osteoclast formation and activity. The polypeptide is Osteoclast-stimulating factor 1 (ostf1) (Danio rerio (Zebrafish)).